We begin with the raw amino-acid sequence, 354 residues long: Chorismate synthase (354 aa).

Arg48 lines the NADP(+) pocket. FMN is bound by residues 126-128, Ala278, 293-297, and Arg319; these read RAS and KPIPS.

The protein belongs to the chorismate synthase family. Homotetramer. The cofactor is FMNH2.

The catalysed reaction is 5-O-(1-carboxyvinyl)-3-phosphoshikimate = chorismate + phosphate. The protein operates within metabolic intermediate biosynthesis; chorismate biosynthesis; chorismate from D-erythrose 4-phosphate and phosphoenolpyruvate: step 7/7. Catalyzes the anti-1,4-elimination of the C-3 phosphate and the C-6 proR hydrogen from 5-enolpyruvylshikimate-3-phosphate (EPSP) to yield chorismate, which is the branch point compound that serves as the starting substrate for the three terminal pathways of aromatic amino acid biosynthesis. This reaction introduces a second double bond into the aromatic ring system. This is Chorismate synthase from Desulfosudis oleivorans (strain DSM 6200 / JCM 39069 / Hxd3) (Desulfococcus oleovorans).